The following is a 236-amino-acid chain: Purine nucleoside phosphorylase DeoD-type 2 (236 aa).

H5 provides a ligand contact to a purine D-ribonucleoside. Phosphate is bound by residues G21, R25, R44, and 88-91 (RVGS). A purine D-ribonucleoside is bound by residues 180–182 (DME) and 204–205 (SD). Residue D205 is the Proton donor of the active site.

Belongs to the PNP/UDP phosphorylase family. Homohexamer; trimer of homodimers.

It carries out the reaction a purine D-ribonucleoside + phosphate = a purine nucleobase + alpha-D-ribose 1-phosphate. It catalyses the reaction a purine 2'-deoxy-D-ribonucleoside + phosphate = a purine nucleobase + 2-deoxy-alpha-D-ribose 1-phosphate. Functionally, catalyzes the reversible phosphorolytic breakdown of the N-glycosidic bond in the beta-(deoxy)ribonucleoside molecules, with the formation of the corresponding free purine bases and pentose-1-phosphate. In Vibrio vulnificus (strain CMCP6), this protein is Purine nucleoside phosphorylase DeoD-type 2.